We begin with the raw amino-acid sequence, 412 residues long: Aspartate aminotransferase, cytoplasmic (412 aa).

Ala2 carries the N-acetylalanine modification. 3 residues coordinate L-aspartate: Gly38, Trp140, and Asn194. N6-(pyridoxal phosphate)lysine is present on Lys258. Arg386 provides a ligand contact to L-aspartate.

Belongs to the class-I pyridoxal-phosphate-dependent aminotransferase family. As to quaternary structure, homodimer. It depends on pyridoxal 5'-phosphate as a cofactor.

Its subcellular location is the cytoplasm. The enzyme catalyses L-aspartate + 2-oxoglutarate = oxaloacetate + L-glutamate. The catalysed reaction is L-cysteine + 2-oxoglutarate = 2-oxo-3-sulfanylpropanoate + L-glutamate. It catalyses the reaction (2S)-2-aminobutanoate + 2-oxoglutarate = 2-oxobutanoate + L-glutamate. It carries out the reaction 3-sulfino-L-alanine + 2-oxoglutarate = 3-sulfinopyruvate + L-glutamate. In terms of biological role, biosynthesis of L-glutamate from L-aspartate or L-cysteine. Important regulator of levels of glutamate, the major excitatory neurotransmitter of the vertebrate central nervous system. Acts as a scavenger of glutamate in brain neuroprotection. The aspartate aminotransferase activity is involved in hepatic glucose synthesis during development and in adipocyte glyceroneogenesis. Using L-cysteine as substrate, regulates levels of mercaptopyruvate, an important source of hydrogen sulfide. Mercaptopyruvate is converted into H(2)S via the action of 3-mercaptopyruvate sulfurtransferase (3MST). Hydrogen sulfide is an important synaptic modulator and neuroprotectant in the brain. This is Aspartate aminotransferase, cytoplasmic from Gallus gallus (Chicken).